We begin with the raw amino-acid sequence, 313 residues long: S-methyl-5'-thioadenosine phosphorylase (313 aa).

Phosphate contacts are provided by residues Thr20, 68–69 (RH), and 101–102 (SA). A substrate-binding site is contributed by Met203. Ser204 serves as a coordination point for phosphate. 227–229 (DYD) contacts substrate.

This sequence belongs to the PNP/MTAP phosphorylase family. MTAP subfamily. In terms of assembly, homotrimer.

It localises to the cytoplasm. Its subcellular location is the nucleus. The catalysed reaction is S-methyl-5'-thioadenosine + phosphate = 5-(methylsulfanyl)-alpha-D-ribose 1-phosphate + adenine. The protein operates within amino-acid biosynthesis; L-methionine biosynthesis via salvage pathway; S-methyl-5-thio-alpha-D-ribose 1-phosphate from S-methyl-5'-thioadenosine (phosphorylase route): step 1/1. Its function is as follows. Catalyzes the reversible phosphorylation of S-methyl-5'-thioadenosine (MTA) to adenine and 5-methylthioribose-1-phosphate. Involved in the breakdown of MTA, a major by-product of polyamine biosynthesis. Responsible for the first step in the methionine salvage pathway after MTA has been generated from S-adenosylmethionine. Has broad substrate specificity with 6-aminopurine nucleosides as preferred substrates. The polypeptide is S-methyl-5'-thioadenosine phosphorylase (Ajellomyces capsulatus (strain G186AR / H82 / ATCC MYA-2454 / RMSCC 2432) (Darling's disease fungus)).